Here is a 545-residue protein sequence, read N- to C-terminus: CTP synthase (545 aa).

The segment at 1–266 is amidoligase domain; the sequence is MTTRYIFVTG…DELVIKRFNI (266 aa). Ser14 is a CTP binding site. Ser14 is a UTP binding site. ATP-binding positions include 15–20 and Asp72; that span reads SLGKGI. Mg(2+) is bound by residues Asp72 and Glu140. Residues 147-149, 187-192, and Lys223 each bind CTP; these read DIE and KTKPTQ. UTP contacts are provided by residues 187 to 192 and Lys223; that span reads KTKPTQ. 239–241 contributes to the ATP binding site; the sequence is KDV. A Glutamine amidotransferase type-1 domain is found at 291 to 542; the sequence is TIGMVGKYIE…IAASLSHQKR (252 aa). Gly352 is a binding site for L-glutamine. Cys379 acts as the Nucleophile; for glutamine hydrolysis in catalysis. L-glutamine-binding positions include 380-383, Glu403, and Arg470; that span reads LGMQ. Residues His515 and Glu517 contribute to the active site.

The protein belongs to the CTP synthase family. As to quaternary structure, homotetramer.

It catalyses the reaction UTP + L-glutamine + ATP + H2O = CTP + L-glutamate + ADP + phosphate + 2 H(+). The enzyme catalyses L-glutamine + H2O = L-glutamate + NH4(+). It carries out the reaction UTP + NH4(+) + ATP = CTP + ADP + phosphate + 2 H(+). It functions in the pathway pyrimidine metabolism; CTP biosynthesis via de novo pathway; CTP from UDP: step 2/2. Its activity is regulated as follows. Allosterically activated by GTP, when glutamine is the substrate; GTP has no effect on the reaction when ammonia is the substrate. The allosteric effector GTP functions by stabilizing the protein conformation that binds the tetrahedral intermediate(s) formed during glutamine hydrolysis. Inhibited by the product CTP, via allosteric rather than competitive inhibition. Catalyzes the ATP-dependent amination of UTP to CTP with either L-glutamine or ammonia as the source of nitrogen. Regulates intracellular CTP levels through interactions with the four ribonucleotide triphosphates. This is CTP synthase from Shewanella denitrificans (strain OS217 / ATCC BAA-1090 / DSM 15013).